Consider the following 787-residue polypeptide: Transcription factor SOX-6 (787 aa).

Residues 1–46 form a disordered region; sequence MSSKQATSPFACAADGEDAMTQDLTSREKEEGSDQHVASHLPLHPI. A compositionally biased stretch (basic and acidic residues) spans 25–34; sequence TSREKEEGSD. T119 is modified (phosphothreonine). Residues 184–262 are a coiled coil; it reads LAEKERQLST…LLQQQIQVQG (79 aa). Residues 340–429 are disordered; the sequence is PGAKMPSTPQ…KSSIPSPIGG (90 aa). The segment covering 352–361 has biased composition (polar residues); sequence NTAGTVSPTG. S358 carries the post-translational modification Phosphoserine. T360 bears the Phosphothreonine mark. Residues K363 and K376 each participate in a glycyl lysine isopeptide (Lys-Gly) (interchain with G-Cter in SUMO) cross-link. 2 positions are modified to phosphoserine: S398 and S401. A compositionally biased stretch (polar residues) spans 398-420; it reads SPTSPTQNLFPASKTSPVNLPNK. A DNA-binding region (HMG box) is located at residues 580–648; that stretch reads IKRPMNAFMV…IHLEKYPNYK (69 aa). Over residues 712 to 740 the composition is skewed to polar residues; the sequence is TPSPQMTSDCSSTSASPEPSLPVIQSTYG. The segment at 712-787 is disordered; the sequence is TPSPQMTSDC…NEAPEAVSAN (76 aa). A compositionally biased stretch (acidic residues) spans 755–768; that stretch reads NGEDEMEMYDDYED.

In terms of assembly, homodimer. Interacts with DAZAP2. May interact with CENPK. Sumoylation inhibits the transcriptional activity.

The protein localises to the nucleus. It localises to the cytoplasm. Its function is as follows. Transcription factor that plays a key role in several developmental processes, including neurogenesis, chondrocytes differentiation and cartilage formation. Specifically binds the 5'-AACAAT-3' DNA motif present in enhancers and super-enhancers and promotes expression of genes important for chondrogenesis. Required for overt chondrogenesis when condensed prechondrocytes differentiate into early stage chondrocytes: SOX5 and SOX6 cooperatively bind with SOX9 on active enhancers and super-enhancers associated with cartilage-specific genes, and thereby potentiate SOX9's ability to transactivate. Not involved in precartilaginous condensation, the first step in chondrogenesis, during which skeletal progenitors differentiate into prechondrocytes. Together with SOX5, required to form and maintain a pool of highly proliferating chondroblasts between epiphyses and metaphyses, to form columnar chondroblasts, delay chondrocyte prehypertrophy but promote hypertrophy, and to delay terminal differentiation of chondrocytes on contact with ossification fronts. Binds to the proximal promoter region of the myelin protein MPZ gene, and is thereby involved in the differentiation of oligodendroglia in the developing spinal tube. Binds to the gene promoter of MBP and acts as a transcriptional repressor. The sequence is that of Transcription factor SOX-6 from Pongo abelii (Sumatran orangutan).